A 143-amino-acid chain; its full sequence is Nucleoside diphosphate kinase (143 aa).

ATP contacts are provided by Lys11, Phe59, Arg87, Thr93, Arg104, and Asn114. The active-site Pros-phosphohistidine intermediate is His117.

This sequence belongs to the NDK family. Homotetramer. Requires Mg(2+) as cofactor.

It is found in the cytoplasm. The catalysed reaction is a 2'-deoxyribonucleoside 5'-diphosphate + ATP = a 2'-deoxyribonucleoside 5'-triphosphate + ADP. It catalyses the reaction a ribonucleoside 5'-diphosphate + ATP = a ribonucleoside 5'-triphosphate + ADP. Major role in the synthesis of nucleoside triphosphates other than ATP. The ATP gamma phosphate is transferred to the NDP beta phosphate via a ping-pong mechanism, using a phosphorylated active-site intermediate. The chain is Nucleoside diphosphate kinase from Shewanella sp. (strain W3-18-1).